The chain runs to 361 residues: DNA double-strand break repair protein Mre11 (361 aa).

Positions 7, 9, 48, and 83 each coordinate Mn(2+). The Proton donor role is filled by H84. Residues H176, H204, and H206 each contribute to the Mn(2+) site.

It belongs to the MRE11/RAD32 family. Homodimer. Forms a heterotetramer composed of two Mre11 subunits and two Rad50 subunits. The cofactor is Mn(2+).

Nuclease activity is regulated by Rad50. Its function is as follows. Part of the Rad50/Mre11 complex, which is involved in the early steps of DNA double-strand break (DSB) repair. The complex may facilitate opening of the processed DNA ends to aid in the recruitment of HerA and NurA. Mre11 binds to DSB ends and has both double-stranded 3'-5' exonuclease activity and single-stranded endonuclease activity. The sequence is that of DNA double-strand break repair protein Mre11 from Nanoarchaeum equitans (strain Kin4-M).